Reading from the N-terminus, the 113-residue chain is uncharacterized protein (113 aa).

Residues 16–70 enclose the HTH cro/C1-type domain; that stretch reads LYEYLEPLDLKINELAELLHVHRNSVSALINNNRKLTTEMAFRLAKVFDTTVDFW. A DNA-binding region (H-T-H motif) is located at residues 27-46; the sequence is INELAELLHVHRNSVSALIN.

This sequence belongs to the VapA/VapI family.

This is an uncharacterized protein from Escherichia coli O6:H1 (strain CFT073 / ATCC 700928 / UPEC).